Consider the following 267-residue polypeptide: Serine/arginine-rich splicing factor 7 (267 aa).

In terms of domain architecture, RRM spans T40–G113. An N6-acetyllysine; alternate modification is found at K53. A Glycyl lysine isopeptide (Lys-Gly) (interchain with G-Cter in SUMO2); alternate cross-link involves residue K53. S61 is subject to Phosphoserine. The sufficient for interaction with NXF1 stretch occupies residues L110–R127. Residues D133–R150 form a CCHC-type zinc finger. Residues S152–R209 are compositionally biased toward basic residues. The tract at residues S152–D267 is disordered. 4 repeat units span residues R182 to P189, R190 to L197, R198 to L205, and R206 to I213. Residues R182–G255 form a 6 X 8 AA repeats of R-R-S-R-S-X-S-X region. Residues S192, S194, and S196 each carry the phosphoserine modification. 5 positions are modified to phosphoserine: S210, S212, S221, S223, and S225. Positions S223 to R251 are enriched in basic residues. Residues S240–P247 form a 5; approximate repeat. Residues K248–G255 form a 6; approximate repeat. Phosphoserine is present on residues S260 and S262.

This sequence belongs to the splicing factor SR family. As to quaternary structure, found in large molecular weight complexes containing CCNL1 and the p110 isoforms of either CDC2L1 or CDC2L2. Interacts with CCNL2 and CPSF6. Interacts with NXF1. Interacts with YTHDC1. Extensively phosphorylated on serine residues in the RS domain.

The protein localises to the nucleus. The protein resides in the cytoplasm. Required for pre-mRNA splicing. Represses the splicing of MAPT/Tau exon 10. May function as export adapter involved in mRNA nuclear export such as of histone H2A. Binds mRNA which is thought to be transferred to the NXF1-NXT1 heterodimer for export (TAP/NXF1 pathway); enhances NXF1-NXT1 RNA-binding activity. RNA-binding is semi-sequence specific. This Mus musculus (Mouse) protein is Serine/arginine-rich splicing factor 7 (Srsf7).